Here is a 681-residue protein sequence, read N- to C-terminus: MAPRVFRRQTLERCLREIRKATNRPECFLTIQNGLASNFTSLTKVLYDFNKVLENGRISGSPLQKLEINSFDDEQIWQQLELQNEPVLQYFQNAVSETVEDEDISLLPECEDEECEEDASEVEADNQENLETDLDEEQLSDEGGDVPKGRDRAKSSRKSDPRKSPVFSDEDSDLDFDIGKLEQQTKMQIKPPGKPREKSVVDDKFFKLSEMESFLEKVEKEEEKRPDGEEEDEEDIDLFEDIDSDESEGGLFGRQKIKSNKSSRNLKYKDFFDPVESDEDITGVDEELGPDEEKEEEEGFAEEADESISDTDEDNDLEEDENSDQHKGSLKRVTFALPDDEAEDTSPLAVKQESDEVKSSFEKRQEKMNEKIASLEKELLDKKPWQLQGEVTAQKRPENSLLEETLHFDHAVRMAPVITEETTLHLEDIIKQRIRDQAWDDVERKEKPKEDAYEYKKRLTLDHEKSKLSLAEIYEQEYLKLNQQKTEEEDNPEHVEIQKMMDSLFLKLDALSNFHFIPKPPVPEIKVVSNLPAITMEEVAPVSVSDAALLAPEEIKEKNKAGDLKTAAEKTATDKKRERRKKKYQKRLKIKEKEKRKKLLEKNNPDQSKSSRAAASEKLKQLTKTGKVSLLKDERKDKPLKSSQAFFSKLQDQVKMQINDAKQPEKIKKKKQDISVHKLKL.

Phosphoserine occurs at positions 61, 120, and 140. Residues 109–139 (ECEDEECEEDASEVEADNQENLETDLDEEQL) are a coiled coil. Residues 111–144 (EDEECEEDASEVEADNQENLETDLDEEQLSDEGG) are compositionally biased toward acidic residues. Disordered stretches follow at residues 111–202 (EDEE…SVVD), 215–256 (LEKV…GRQK), and 268–365 (YKDF…EKRQ). Basic and acidic residues predominate over residues 145 to 163 (DVPKGRDRAKSSRKSDPRK). 3 positions are modified to phosphoserine: S164, S168, and S172. The segment covering 215 to 227 (LEKVEKEEEKRPD) has biased composition (basic and acidic residues). Composition is skewed to acidic residues over residues 228-248 (GEEE…DESE) and 273-322 (DPVE…EDEN). S244, S247, S277, and S346 each carry phosphoserine. Residues 349 to 383 (AVKQESDEVKSSFEKRQEKMNEKIASLEKELLDKK) are a coiled coil. K351 is covalently cross-linked (Glycyl lysine isopeptide (Lys-Gly) (interchain with G-Cter in SUMO2)). Positions 352-365 (QESDEVKSSFEKRQ) are enriched in basic and acidic residues. Glycyl lysine isopeptide (Lys-Gly) (interchain with G-Cter in SUMO2) cross-links involve residues K383 and K395. The stretch at 471–491 (AEIYEQEYLKLNQQKTEEEDN) forms a coiled coil. Residue K556 forms a Glycyl lysine isopeptide (Lys-Gly) (interchain with G-Cter in SUMO2) linkage. Residues 560–576 (KAGDLKTAAEKTATDKK) show a composition bias toward basic and acidic residues. Positions 560–644 (KAGDLKTAAE…RKDKPLKSSQ (85 aa)) are disordered. The stretch at 575–604 (KKRERRKKKYQKRLKIKEKEKRKKLLEKNN) forms a coiled coil. The segment covering 577–599 (RERRKKKYQKRLKIKEKEKRKKL) has biased composition (basic residues). K609 is modified (N6-acetyllysine). Basic and acidic residues predominate over residues 630–640 (LLKDERKDKPL). Glycyl lysine isopeptide (Lys-Gly) (interchain with G-Cter in SUMO2) cross-links involve residues K632 and K649. Residues 657–681 (QINDAKQPEKIKKKKQDISVHKLKL) form a disordered region. Over residues 662–681 (KQPEKIKKKKQDISVHKLKL) the composition is skewed to basic and acidic residues.

The protein belongs to the MPP10 family. In terms of assembly, part of the small subunit (SSU) processome, composed of more than 70 proteins and the RNA chaperone small nucleolar RNA (snoRNA) U3. Component of a heterotrimeric complex containing IMP3, IMP4 and MPHOSPH10. Interacts with IMP3 and IMP4. In terms of processing, phosphorylated in M (mitotic) phase.

It localises to the nucleus. The protein localises to the nucleolus. The protein resides in the chromosome. In terms of biological role, component of the 60-80S U3 small nucleolar ribonucleoprotein (U3 snoRNP). Required for the early cleavages during pre-18S ribosomal RNA processing. Part of the small subunit (SSU) processome, first precursor of the small eukaryotic ribosomal subunit. During the assembly of the SSU processome in the nucleolus, many ribosome biogenesis factors, an RNA chaperone and ribosomal proteins associate with the nascent pre-rRNA and work in concert to generate RNA folding, modifications, rearrangements and cleavage as well as targeted degradation of pre-ribosomal RNA by the RNA exosome. The polypeptide is U3 small nucleolar ribonucleoprotein protein MPP10 (Mphosph10) (Mus musculus (Mouse)).